The following is a 354-amino-acid chain: Selection and upkeep of intraepithelial T-cells protein 1 (354 aa).

Positions 23–141 constitute an Ig-like V-type 1 domain; sequence PSSEQFTVNS…EEAIAEVKVT (119 aa). 2 disulfide bridges follow: C49-C123 and C163-C217. Positions 161 to 233 constitute an Ig-like C1-type 2 domain; it reads VECNSEGWFP…TGQEERTSIV (73 aa). Helical transmembrane passes span 243 to 263, 283 to 303, and 326 to 346; these read SVWI…IMMP, LIGI…TITL, and MTVM…LVYF.

Belongs to the SKINT family. In terms of tissue distribution, expressed in the thymus and skin.

It localises to the membrane. In terms of biological role, may act by engaging a cell surface molecule on immature T-cells in the embryonic thymus. The protein is Selection and upkeep of intraepithelial T-cells protein 1 (SKINT1) of Macaca fascicularis (Crab-eating macaque).